The primary structure comprises 232 residues: Ribose-5-phosphate isomerase A (232 aa).

Substrate contacts are provided by residues 28 to 31 (TGST), 83 to 86 (DGAD), and 96 to 99 (KGGG). Glutamate 105 serves as the catalytic Proton acceptor. Lysine 123 is a binding site for substrate.

Belongs to the ribose 5-phosphate isomerase family. Homodimer.

It carries out the reaction aldehydo-D-ribose 5-phosphate = D-ribulose 5-phosphate. It functions in the pathway carbohydrate degradation; pentose phosphate pathway; D-ribose 5-phosphate from D-ribulose 5-phosphate (non-oxidative stage): step 1/1. Catalyzes the reversible conversion of ribose-5-phosphate to ribulose 5-phosphate. This Rhodopseudomonas palustris (strain ATCC BAA-98 / CGA009) protein is Ribose-5-phosphate isomerase A.